The sequence spans 227 residues: uncharacterized protein (227 aa).

Residues 3–119 form the RCK N-terminal domain; the sequence is RADFCIIGLG…STMGIREALI (117 aa). The 88-residue stretch at 134 to 221 folds into the RCK C-terminal domain; it reads HGLENEIINL…LNKYLNYINP (88 aa).

This is an uncharacterized protein from Mycoplasma genitalium (strain ATCC 33530 / DSM 19775 / NCTC 10195 / G37) (Mycoplasmoides genitalium).